Here is a 70-residue protein sequence, read N- to C-terminus: U2-agatoxin-Ao1l (70 aa).

The signal sequence occupies residues 1 to 20 (MRAIISLLLISAMVFSIIEA). Residues 21–34 (VPEEEGLQLSEDER) constitute a propeptide that is removed on maturation. 3 disulfide bridges follow: Cys37/Cys53, Cys44/Cys58, and Cys52/Cys68. Leu69 is modified (leucine amide).

This sequence belongs to the neurotoxin 01 (U2-agtx) family. As to expression, expressed by the venom gland.

The protein resides in the secreted. Its function is as follows. Insect active toxin causing rapid but reversible paralysis in crickets. No activity shown in mammals. Does not show effect on mammalian voltage-gated calcium channels. This Agelena orientalis (Funnel-web spider) protein is U2-agatoxin-Ao1l.